The following is a 234-amino-acid chain: tRNA (guanine-N(1)-)-methyltransferase (234 aa).

S-adenosyl-L-methionine-binding positions include Gly-112 and 132–137 (IGDFIL).

The protein belongs to the RNA methyltransferase TrmD family. As to quaternary structure, homodimer.

Its subcellular location is the cytoplasm. The enzyme catalyses guanosine(37) in tRNA + S-adenosyl-L-methionine = N(1)-methylguanosine(37) in tRNA + S-adenosyl-L-homocysteine + H(+). Functionally, specifically methylates guanosine-37 in various tRNAs. The chain is tRNA (guanine-N(1)-)-methyltransferase from Campylobacter jejuni (strain RM1221).